Reading from the N-terminus, the 97-residue chain is uncharacterized protein (97 aa).

This is an uncharacterized protein from Methanothermococcus thermolithotrophicus (Methanococcus thermolithotrophicus).